Here is a 222-residue protein sequence, read N- to C-terminus: Lipid A 4'-phosphatase (222 aa).

The Cytoplasmic segment spans residues 1–3 (MAR). Residues 4-24 (FHIILGLVVCFFAWIFFLIFP) form a helical membrane-spanning segment. At 25–58 (NLDIQFAGHFYNSSAHQFIGGYDGFLGFLHWFAR) the chain is on the periplasmic side. A helical transmembrane segment spans residues 59–79 (FFPIFFSIIVILFLLGSLFID). Topologically, residues 80 to 87 (KFKIKYRK) are cytoplasmic. The chain crosses the membrane as a helical span at residues 88–108 (AIFFIAVCLWIGPGLVVNYVF). Residues 109–144 (KDHWGRPRPVMVEQFNGDKIFQPPFVISSQCDKNCS) are Periplasmic-facing. Residues 145–165 (FVCGDASMGFWLFAFMPLLAT) form a helical membrane-spanning segment. Topologically, residues 166–169 (RKKK) are cytoplasmic. Residues 170–190 (LVAFIAAVVAGGGLGLMRMSQ) form a helical membrane-spanning segment. Residues 191 to 193 (GGH) are Periplasmic-facing. A helical transmembrane segment spans residues 194–214 (FFSDVVFCGIFVYISTWVVYA). Residues 215–222 (LMYRKKEY) are Cytoplasmic-facing.

Belongs to the lipid A LpxF 4'-phosphatase family.

Its subcellular location is the cell inner membrane. The protein operates within bacterial outer membrane biogenesis; LPS lipid A biosynthesis. In terms of biological role, removes the 4'-phosphate moiety from lipid IV(A) (a tetraacylated precursor of lipid A) and from pentaacylated lipid A, but not from hexaacylated lipid A (as is found in E.coli). Does not dephosphorylate phosphatidic acid, phosphatidylglycerophosphate, or the 1-phosphate group of lipid A and lipid A precursors. Its expression in E.coli confers resistance to the cationic antimicrobial peptide (CAMP) polymyxin B. Plays a critical role in the ability of the bacteria to avoid the host's innate immune system, especially the bactericidal action of CAMPs, although whether it is CAMP-sensitivity or increased sensitivity to the immune system is not clear. The chain is Lipid A 4'-phosphatase from Francisella tularensis subsp. novicida (strain U112).